A 200-amino-acid chain; its full sequence is LHFPL tetraspan subfamily member 6 protein (200 aa).

A signal peptide spans 1–21 (MASSLTCTGVIWALLSFLCAA). A run of 3 helical transmembrane segments spans residues 84–104 (ICTIVTGLGCGLLLLVALTAL), 123–143 (GIQFLGGLLIGAGCALYPLGW), and 166–186 (IGWAYYCTGAGATAAMLLCTW).

It belongs to the LHFP family. In terms of tissue distribution, pancreas, kidney, skeletal muscle, liver, lung brain, heart, colon, small intestine, uterus, testis, prostate, thymus, spleen and placenta.

It is found in the membrane. This chain is LHFPL tetraspan subfamily member 6 protein, found in Homo sapiens (Human).